We begin with the raw amino-acid sequence, 393 residues long: Telomeric repeat-binding factor 2-interacting protein 1 (393 aa).

N-acetylalanine is present on A2. Phosphoserine occurs at positions 36 and 43. The BRCT domain maps to 78 to 101 (FISTQYILDCVDRNEKLDLEAYRL). The disordered stretch occupies residues 104 to 132 (TEQASDPKPGASTEGSTEPEPQPLTGRIA). Residue K111 forms a Glycyl lysine isopeptide (Lys-Gly) (interchain with G-Cter in SUMO2) linkage. A Myb-like domain is found at 125–185 (QPLTGRIAYT…SLKDRYLKHL (61 aa)). 2 positions are modified to phosphoserine: S151 and S153. Residue K191 forms a Glycyl lysine isopeptide (Lys-Gly) (interchain with G-Cter in SUMO2) linkage. The segment at 193–304 (LLGNAPVSPS…EEEPKVSTQE (112 aa)) is disordered. A phosphoserine mark is found at S200 and S203. Glycyl lysine isopeptide (Lys-Gly) (interchain with G-Cter in SUMO2) cross-links involve residues K205, K209, and K237. A compositionally biased stretch (basic and acidic residues) spans 223-252 (QNKRAPDLPEEECVKGEIKENGEADNKLFE). Residues 282–297 (TPEEDSETQPDEEEEE) show a composition bias toward acidic residues. A Glycyl lysine isopeptide (Lys-Gly) (interchain with G-Cter in SUMO2) cross-link involves residue K366. The short motif at 377–393 (KKFGAQNVARRIEFRKK) is the Nuclear localization signal element.

This sequence belongs to the RAP1 family. Homodimer. Component of the shelterin complex (telosome) composed of TERF1, TERF2, TINF2, TERF2IP ACD and POT1. Binds to TERF2 (but not TERF1) with its C-terminus. Interacts with SLX4/BTBD12. Interacts with TERF2; the interaction is direct. Does not interact with TERF1. Associates with the I-kappa-B-kinase (IKK) core complex, composed of CHUK, IKBKB and IKBKG.

Its subcellular location is the nucleus. The protein localises to the cytoplasm. The protein resides in the chromosome. It localises to the telomere. Functionally, acts both as a regulator of telomere function and as a transcription regulator. Involved in the regulation of telomere length and protection as a component of the shelterin complex (telosome). In contrast to other components of the shelterin complex, it is dispensible for telomere capping and does not participate in the protection of telomeres against non-homologous end-joining (NHEJ)-mediated repair. Instead, it is required to negatively regulate telomere recombination and is essential for repressing homology-directed repair (HDR), which can affect telomere length. Does not bind DNA directly: recruited to telomeric double-stranded 5'-TTAGGG-3' repeats via its interaction with TERF2. Independently of its function in telomeres, also acts as a transcription regulator: recruited to extratelomeric 5'-TTAGGG-3' sites via its association with TERF2 or other factors, and regulates gene expression. When cytoplasmic, associates with the I-kappa-B-kinase (IKK) complex and acts as a regulator of the NF-kappa-B signaling by promoting IKK-mediated phosphorylation of RELA/p65, leading to activate expression of NF-kappa-B target genes. This chain is Telomeric repeat-binding factor 2-interacting protein 1 (Terf2ip), found in Mus musculus (Mouse).